Reading from the N-terminus, the 386-residue chain is MAAIPALDPEAEPSMDVILVGSSELSSSVSPGTGRDLIAYEVKANQRNIEDICICCGSLQVHTQHPLFEGGICAPCKDKFLDALFLYDDDGYQSYCSICCSGETLLICGNPDCTRCYCFECVDSLVGPGTSGKVHAMSNWVCYLCLPSSRSGLLQRRRKWRSQLKAFYDRESENPLEMFETVPVWRRQPVRVLSLFEDIKKELTSLGFLESGSDPGQLKHVVDVTDTVRKDVEEWGPFDLVYGATPPLGHTCDRPPSWYLFQFHRLLQYARPKPGSPRPFFWMFVDNLVLNKEDLDVASRFLEMEPVTIPDVHGGSLQNAVRVWSNIPAIRSRHWALVSEEELSLLAQNKQSSKLAAKWPTKLVKNCFLPLREYFKYFSTELTSSL.

Residues 41-173 (EVKANQRNIE…LKAFYDRESE (133 aa)) form the ADD domain. The GATA-type; atypical zinc-finger motif lies at 52–82 (ICICCGSLQVHTQHPLFEGGICAPCKDKFLD). Residues 93–149 (QSYCSICCSGETLLICGNPDCTRCYCFECVDSLVGPGTSGKVHAMSNWVCYLCLPSS) form a PHD-type; atypical zinc finger.

In terms of assembly, homodimer. Heterotetramer composed of 1 DNMT3A homodimer and 2 DNMT3L subunits (DNMT3L-DNMT3A-DNMT3A-DNMT3L). Interacts with histone H3 (via N-terminus); interaction is strongly inhibited by methylation at lysine 4 (H3K4me). Interacts with EZH2; the interaction is direct. Interacts with SPOCD1. Expressed at low levels in several tissues including testis, ovary, and thymus.

It is found in the nucleus. Catalytically inactive regulatory factor of DNA methyltransferases that can either promote or inhibit DNA methylation depending on the context. Essential for the function of DNMT3A and DNMT3B: activates DNMT3A and DNMT3B by binding to their catalytic domain. Acts by accelerating the binding of DNA and S-adenosyl-L-methionine (AdoMet) to the methyltransferases and dissociates from the complex after DNA binding to the methyltransferases. Recognizes unmethylated histone H3 lysine 4 (H3K4me0) and induces de novo DNA methylation by recruitment or activation of DNMT3. Plays a key role in embryonic stem cells and germ cells. In germ cells, required for the methylation of imprinted loci together with DNMT3A. In male germ cells, specifically required to methylate retrotransposons, preventing their mobilization. Plays a key role in embryonic stem cells (ESCs) by acting both as an positive and negative regulator of DNA methylation. While it promotes DNA methylation of housekeeping genes together with DNMT3A and DNMT3B, it also acts as an inhibitor of DNA methylation at the promoter of bivalent genes. Interacts with the EZH2 component of the PRC2/EED-EZH2 complex, preventing interaction of DNMT3A and DNMT3B with the PRC2/EED-EZH2 complex, leading to maintain low methylation levels at the promoters of bivalent genes. Promotes differentiation of ESCs into primordial germ cells by inhibiting DNA methylation at the promoter of RHOX5, thereby activating its expression. This Homo sapiens (Human) protein is DNA (cytosine-5)-methyltransferase 3-like (DNMT3L).